The chain runs to 409 residues: Glycosaminoglycan xylosylkinase (409 aa).

The Cytoplasmic portion of the chain corresponds to Met1–Arg6. A helical; Signal-anchor for type II membrane protein transmembrane segment spans residues Val7–Ile25. Over Asp26–Leu409 the chain is Lumenal. Gln107 and Lys123 together coordinate ATP. Asp142 contributes to the Mn(2+) binding site. N-linked (GlcNAc...) asparagine glycosylation is present at Asn193. 2 disulfide bridges follow: Cys196/Cys211 and Cys201/Cys204. Thr222–Leu225 contacts ATP. 2 cysteine pairs are disulfide-bonded: Cys257-Cys331 and Cys332-Cys389. Asp289 is an active-site residue. 2 residues coordinate ATP: Glu294 and Asp309. Position 309 (Asp309) interacts with Mn(2+).

It belongs to the FAM20 family. Mn(2+) is required as a cofactor. In terms of tissue distribution, widely expressed. Strongly expressed in pancreas, spleen and fetal liver.

The protein localises to the golgi apparatus membrane. It catalyses the reaction 3-O-(beta-D-galactosyl-(1-&gt;3)-beta-D-galactosyl-(1-&gt;4)-beta-D-xylosyl)-L-seryl-[protein] + ATP = 3-O-(beta-D-galactosyl-(1-&gt;3)-beta-D-galactosyl-(1-&gt;4)-beta-D-2-O-phosphoxylosyl)-L-seryl-[protein] + ADP + H(+). Responsible for the 2-O-phosphorylation of xylose in the glycosaminoglycan-protein linkage region of proteoglycans thereby regulating the amount of mature GAG chains. Sulfated glycosaminoglycans (GAGs), including heparan sulfate and chondroitin sulfate, are synthesized on the so-called common GAG-protein linkage region (GlcUAbeta1-3Galbeta1-3Galbeta1-4Xylbeta1-O-Ser) of core proteins, which is formed by the stepwise addition of monosaccharide residues by the respective specific glycosyltransferases. Xylose 2-O-phosphorylation may influence the catalytic activity of B3GAT3 (GlcAT-I) which completes the precursor tetrasaccharide of GAG-protein linkage regions on which the repeating disaccharide region is synthesized. The chain is Glycosaminoglycan xylosylkinase from Homo sapiens (Human).